The following is a 110-amino-acid chain: uncharacterized protein (110 aa).

A signal peptide spans 1-23 (MKRITINIITMFIAAAVISLTGT).

This is an uncharacterized protein from Bacillus subtilis (strain 168).